Consider the following 440-residue polypeptide: NADH-quinone oxidoreductase subunit D 1 (440 aa).

This sequence belongs to the complex I 49 kDa subunit family. NDH-1 is composed of 14 different subunits. Subunits NuoB, C, D, E, F, and G constitute the peripheral sector of the complex.

It localises to the cell membrane. The enzyme catalyses a quinone + NADH + 5 H(+)(in) = a quinol + NAD(+) + 4 H(+)(out). Functionally, NDH-1 shuttles electrons from NADH, via FMN and iron-sulfur (Fe-S) centers, to quinones in the respiratory chain. The immediate electron acceptor for the enzyme in this species is believed to be a menaquinone. Couples the redox reaction to proton translocation (for every two electrons transferred, four hydrogen ions are translocated across the cytoplasmic membrane), and thus conserves the redox energy in a proton gradient. In Streptomyces griseus subsp. griseus (strain JCM 4626 / CBS 651.72 / NBRC 13350 / KCC S-0626 / ISP 5235), this protein is NADH-quinone oxidoreductase subunit D 1.